The chain runs to 432 residues: Septin-11 (432 aa).

The residue at position 2 (alanine 2) is an N-acetylalanine. A Phosphoserine modification is found at serine 9. The Septin-type G domain occupies 38–304 (QGFCFNILCV…ELYRRCKLEE (267 aa)). Residues 48 to 55 (GETGIGKS) form a G1 motif region. GTP contacts are provided by residues 48–55 (GETGIGKS), glycine 103, 184–192 (KADTIAKNE), glycine 238, and arginine 253. The G3 motif stretch occupies residues 100-103 (DTVG). Positions 183-186 (AKAD) are G4 motif. A coiled-coil region spans residues 320–413 (QETYEAKRNE…LLQSQAQQSG (94 aa)). Residues 403–416 (QLLQSQAQQSGAQQ) are compositionally biased toward low complexity. Positions 403–432 (QLLQSQAQQSGAQQTKKDKDKKNSPWLCTE) are disordered.

It belongs to the TRAFAC class TrmE-Era-EngA-EngB-Septin-like GTPase superfamily. Septin GTPase family. Septins polymerize into heterooligomeric protein complexes that form filaments, and can associate with cellular membranes, actin filaments and microtubules. Forms homooligomers. GTPase activity is required for filament formation. Interacts with SEPTIN7, SEPTIN9 and SEPTIN12.

It is found in the cytoplasm. The protein localises to the cytoskeleton. It localises to the synapse. The protein resides in the cell projection. Its subcellular location is the dendritic spine. It is found in the axon. Functionally, filament-forming cytoskeletal GTPase. May play a role in cytokinesis (Potential). May play a role in the cytoarchitecture of neurons, including dendritic arborization and dendritic spines, and in GABAergic synaptic connectivity. The chain is Septin-11 from Macaca fascicularis (Crab-eating macaque).